The sequence spans 317 residues: tRNA dimethylallyltransferase (317 aa).

14–21 (GPTAVGKT) is an ATP binding site. Residue 16–21 (TAVGKT) participates in substrate binding. Residues 39–42 (DSMQ) form an interaction with substrate tRNA region.

It belongs to the IPP transferase family. Monomer. Mg(2+) is required as a cofactor.

The enzyme catalyses adenosine(37) in tRNA + dimethylallyl diphosphate = N(6)-dimethylallyladenosine(37) in tRNA + diphosphate. In terms of biological role, catalyzes the transfer of a dimethylallyl group onto the adenine at position 37 in tRNAs that read codons beginning with uridine, leading to the formation of N6-(dimethylallyl)adenosine (i(6)A). This Bacillus thuringiensis subsp. konkukian (strain 97-27) protein is tRNA dimethylallyltransferase.